A 251-amino-acid chain; its full sequence is 5-oxoprolinase subunit A (251 aa).

Belongs to the LamB/PxpA family. In terms of assembly, forms a complex composed of PxpA, PxpB and PxpC.

The catalysed reaction is 5-oxo-L-proline + ATP + 2 H2O = L-glutamate + ADP + phosphate + H(+). Its function is as follows. Catalyzes the cleavage of 5-oxoproline to form L-glutamate coupled to the hydrolysis of ATP to ADP and inorganic phosphate. The sequence is that of 5-oxoprolinase subunit A from Tolumonas auensis (strain DSM 9187 / NBRC 110442 / TA 4).